Here is a 630-residue protein sequence, read N- to C-terminus: tRNA uridine 5-carboxymethylaminomethyl modification enzyme MnmG (630 aa).

13–18 is a binding site for FAD; sequence GGGHAG. 273–287 lines the NAD(+) pocket; the sequence is GPRYCPSIEDKVMRF.

This sequence belongs to the MnmG family. In terms of assembly, homodimer. Heterotetramer of two MnmE and two MnmG subunits. It depends on FAD as a cofactor.

It localises to the cytoplasm. Functionally, NAD-binding protein involved in the addition of a carboxymethylaminomethyl (cmnm) group at the wobble position (U34) of certain tRNAs, forming tRNA-cmnm(5)s(2)U34. This chain is tRNA uridine 5-carboxymethylaminomethyl modification enzyme MnmG, found in Actinobacillus pleuropneumoniae serotype 3 (strain JL03).